Consider the following 362-residue polypeptide: Phosphoserine aminotransferase (362 aa).

L-glutamate contacts are provided by Ser-9 and Arg-42. Residues 76–77 (GR), Trp-102, Thr-153, Asp-174, and Gln-197 contribute to the pyridoxal 5'-phosphate site. Lys-198 bears the N6-(pyridoxal phosphate)lysine mark. Pyridoxal 5'-phosphate is bound at residue 239-240 (NT).

The protein belongs to the class-V pyridoxal-phosphate-dependent aminotransferase family. SerC subfamily. In terms of assembly, homodimer. It depends on pyridoxal 5'-phosphate as a cofactor.

The protein localises to the cytoplasm. The catalysed reaction is O-phospho-L-serine + 2-oxoglutarate = 3-phosphooxypyruvate + L-glutamate. It catalyses the reaction 4-(phosphooxy)-L-threonine + 2-oxoglutarate = (R)-3-hydroxy-2-oxo-4-phosphooxybutanoate + L-glutamate. It participates in amino-acid biosynthesis; L-serine biosynthesis; L-serine from 3-phospho-D-glycerate: step 2/3. The protein operates within cofactor biosynthesis; pyridoxine 5'-phosphate biosynthesis; pyridoxine 5'-phosphate from D-erythrose 4-phosphate: step 3/5. In terms of biological role, catalyzes the reversible conversion of 3-phosphohydroxypyruvate to phosphoserine and of 3-hydroxy-2-oxo-4-phosphonooxybutanoate to phosphohydroxythreonine. The polypeptide is Phosphoserine aminotransferase (Escherichia coli O17:K52:H18 (strain UMN026 / ExPEC)).